The following is a 458-amino-acid chain: Mitochondrial distribution and morphology protein 10 (458 aa).

Residues 307 to 339 (LDQRRTEPLDAPNTNSSVFSKERVQKKQGPKED) are disordered. Over residues 326–339 (SKERVQKKQGPKED) the composition is skewed to basic and acidic residues.

The protein belongs to the MDM10 family. Component of the ER-mitochondria encounter structure (ERMES) or MDM complex, composed of MMM1, MDM10, MDM12 and MDM34. Associates with the mitochondrial outer membrane sorting assembly machinery SAM(core) complex.

It localises to the mitochondrion outer membrane. Component of the ERMES/MDM complex, which serves as a molecular tether to connect the endoplasmic reticulum and mitochondria. Components of this complex are involved in the control of mitochondrial shape and protein biogenesis and may function in phospholipid exchange. MDM10 is involved in the late assembly steps of the general translocase of the mitochondrial outer membrane (TOM complex). Functions in the TOM40-specific route of the assembly of outer membrane beta-barrel proteins, including the association of TOM40 with the receptor TOM22 and small TOM proteins. Can associate with the SAM(core) complex as well as the MDM12-MMM1 complex, both involved in late steps of the major beta-barrel assembly pathway, that is responsible for biogenesis of all outer membrane beta-barrel proteins. May act as a switch that shuttles between both complexes and channels precursor proteins into the TOM40-specific pathway. Plays a role in mitochondrial morphology and in the inheritance of mitochondria. In Lachancea thermotolerans (strain ATCC 56472 / CBS 6340 / NRRL Y-8284) (Yeast), this protein is Mitochondrial distribution and morphology protein 10.